We begin with the raw amino-acid sequence, 406 residues long: MVSVTHCDSLWFGADIITMRGGNYQLIPQGAIAVTGDKIVWIGPHAELPPIHAARQVVYEGGLITPGLIDCHTHLVFGDDRSNEFEQRLNGVSYAEIAANGGGIISTVRATRQASEQQLLEQALFRLKPLLAEGVTTIEIKSGYGLNLESEIKMLRVARRLGELLPIDVKTTCLAAHALPPEFIGQPDDYIDVVCNSIIPQVAVENLADAVDAFCEHLAFSPAQVERVFLAAQKAGLPVKLHAEQLSALRGATLAAKFHAISADHLEYATESDVQAMANAGTVAVLLPGAYYLLRETQCPPIDLFRQYKVPMALASDANPGTSPVLSLRLMLNMACTLFRMTPEEALAGVTCHAAQALGVQQTQGTLETGKLANWVHWPLSHPAELAYWLGGQLPATVVFRGEVRP.

Fe(3+) is bound by residues His72 and His74. Residues His72 and His74 each contribute to the Zn(2+) site. Residues Arg81, Tyr144, and His177 each coordinate 4-imidazolone-5-propanoate. Tyr144 provides a ligand contact to N-formimidoyl-L-glutamate. Residue His242 coordinates Fe(3+). His242 is a Zn(2+) binding site. Position 245 (Gln245) interacts with 4-imidazolone-5-propanoate. Residue Asp317 participates in Fe(3+) binding. A Zn(2+)-binding site is contributed by Asp317. N-formimidoyl-L-glutamate-binding residues include Asn319 and Gly321. Thr322 contributes to the 4-imidazolone-5-propanoate binding site.

Belongs to the metallo-dependent hydrolases superfamily. HutI family. Zn(2+) is required as a cofactor. Fe(3+) serves as cofactor.

The protein localises to the cytoplasm. The enzyme catalyses 4-imidazolone-5-propanoate + H2O = N-formimidoyl-L-glutamate. The protein operates within amino-acid degradation; L-histidine degradation into L-glutamate; N-formimidoyl-L-glutamate from L-histidine: step 3/3. Functionally, catalyzes the hydrolytic cleavage of the carbon-nitrogen bond in imidazolone-5-propanoate to yield N-formimidoyl-L-glutamate. It is the third step in the universal histidine degradation pathway. In Yersinia pestis bv. Antiqua (strain Antiqua), this protein is Imidazolonepropionase.